The sequence spans 240 residues: UDP-2,3-diacylglucosamine hydrolase (240 aa).

The Mn(2+) site is built by D8, H10, D41, N79, and H114. 79–80 (NR) is a substrate binding site. Positions 122, 160, 164, 167, and 195 each coordinate substrate. Residues H195 and H197 each contribute to the Mn(2+) site.

It belongs to the LpxH family. Mn(2+) serves as cofactor.

It localises to the cell inner membrane. The catalysed reaction is UDP-2-N,3-O-bis[(3R)-3-hydroxytetradecanoyl]-alpha-D-glucosamine + H2O = 2-N,3-O-bis[(3R)-3-hydroxytetradecanoyl]-alpha-D-glucosaminyl 1-phosphate + UMP + 2 H(+). It functions in the pathway glycolipid biosynthesis; lipid IV(A) biosynthesis; lipid IV(A) from (3R)-3-hydroxytetradecanoyl-[acyl-carrier-protein] and UDP-N-acetyl-alpha-D-glucosamine: step 4/6. In terms of biological role, hydrolyzes the pyrophosphate bond of UDP-2,3-diacylglucosamine to yield 2,3-diacylglucosamine 1-phosphate (lipid X) and UMP by catalyzing the attack of water at the alpha-P atom. Involved in the biosynthesis of lipid A, a phosphorylated glycolipid that anchors the lipopolysaccharide to the outer membrane of the cell. The chain is UDP-2,3-diacylglucosamine hydrolase from Yersinia pestis bv. Antiqua (strain Angola).